Here is a 220-residue protein sequence, read N- to C-terminus: Translation initiation factor 6 (220 aa).

This sequence belongs to the eIF-6 family.

Functionally, binds to the 50S ribosomal subunit and prevents its association with the 30S ribosomal subunit to form the 70S initiation complex. The sequence is that of Translation initiation factor 6 from Pyrobaculum arsenaticum (strain DSM 13514 / JCM 11321 / PZ6).